A 306-amino-acid chain; its full sequence is MSQYHIPVMLSEVLEVLAPKGYESYLDCTFGAGGYSNAILKSCYCSVTSLDCDPHVIERVEQIKQDYGERFSFIKTNFADSFGKLKQQKFDGIVMDLGVSSMQLDIAGRGFSFLYDGPLDMRMSAQGFSAEEFVNTADEEEISDVIYKYGNESLSRRIAKNIIKYRKIARIDSTRKLAEIVRYSIGFRKGKIDSATKTFQAIRIYINNELGELERFLANVKNILKKNGRLVVVSFHSLEDRIVKNFFKENSAKPVARSKYAKDEIKIDQNKWLEIITHKVLTPSSQEIRLNVRARSAKLRAAKKIL.

Residues G33–Y35, D51, F78, D96, and Q103 each bind S-adenosyl-L-methionine.

It belongs to the methyltransferase superfamily. RsmH family.

The protein resides in the cytoplasm. It catalyses the reaction cytidine(1402) in 16S rRNA + S-adenosyl-L-methionine = N(4)-methylcytidine(1402) in 16S rRNA + S-adenosyl-L-homocysteine + H(+). Specifically methylates the N4 position of cytidine in position 1402 (C1402) of 16S rRNA. In Rickettsia typhi (strain ATCC VR-144 / Wilmington), this protein is Ribosomal RNA small subunit methyltransferase H.